Reading from the N-terminus, the 636-residue chain is Threonine--tRNA ligase (636 aa).

The TGS domain maps to 1–63; the sequence is MNEINVTLPD…ADGARVEIIT (63 aa). A catalytic region spans residues 243–534; the sequence is DHRKLGRELD…LIEHFAGNFP (292 aa). Zn(2+) contacts are provided by Cys335, His386, and His511.

The protein belongs to the class-II aminoacyl-tRNA synthetase family. Homodimer. The cofactor is Zn(2+).

The protein resides in the cytoplasm. It carries out the reaction tRNA(Thr) + L-threonine + ATP = L-threonyl-tRNA(Thr) + AMP + diphosphate + H(+). Its function is as follows. Catalyzes the attachment of threonine to tRNA(Thr) in a two-step reaction: L-threonine is first activated by ATP to form Thr-AMP and then transferred to the acceptor end of tRNA(Thr). Also edits incorrectly charged L-seryl-tRNA(Thr). In Citrifermentans bemidjiense (strain ATCC BAA-1014 / DSM 16622 / JCM 12645 / Bem) (Geobacter bemidjiensis), this protein is Threonine--tRNA ligase.